Consider the following 518-residue polypeptide: Receptor-interacting serine/threonine-protein kinase 3 (518 aa).

S2 bears the Phosphoserine mark. The Protein kinase domain occupies 21 to 287; sequence LENQELVGKG…ECLPKTDEVF (267 aa). Residue 27–35 coordinates ATP; sequence VGKGGFGTV. K42 is covalently cross-linked (Glycyl lysine isopeptide (Lys-Gly) (interchain with G-Cter in ubiquitin)). K50 is a binding site for ATP. D142 functions as the Proton acceptor in the catalytic mechanism. Phosphoserine is present on S164. A Phosphothreonine modification is found at T182. Phosphoserine; by autocatalysis occurs at positions 199 and 227. The residue at position 252 (T252) is a Phosphothreonine. Residue S299 is modified to Phosphoserine. T333 bears the Phosphothreonine mark. Residues K351 and K363 each participate in a glycyl lysine isopeptide (Lys-Gly) (interchain with G-Cter in ubiquitin) cross-link. The interval 355 to 443 is disordered; that stretch reads EEPPSSVPKK…WSCRTPEPNP (89 aa). The segment covering 384 to 408 has biased composition (polar residues); it reads TAGTSSDSMAQPPQTPETSTFRNQM. Position 389 is a phosphoserine (S389). The residue at position 401 (T401) is a Phosphothreonine. Residues 450 to 466 carry the RIP homotypic interaction motif (RHIM) motif; the sequence is VNIYNCSGVQVGDNNYL. Positions 476–518 are disordered; it reads TWGLAPSGKGRGLQHPPPVGSQEGPKDPEAWSRPQGWYNHSGK. K518 participates in a covalent cross-link: Glycyl lysine isopeptide (Lys-Gly) (interchain with G-Cter in ubiquitin).

It belongs to the protein kinase superfamily. TKL Ser/Thr protein kinase family. As to quaternary structure, interacts (via RIP homotypic interaction motif) with RIPK1 (via RIP homotypic interaction motif); this interaction induces RIPK1 phosphorylation and formation of a RIPK1-RIPK3 necrosis-inducing complex. Interacts with MLKL; the interaction is direct and triggers necroptosis. Interacts with ZBP1 (via RIP homotypic interaction motif); interaction with ZBP1 activates RIPK3, triggering necroptosis. Upon TNF-induced necrosis, the RIPK1-RIPK3 dimer further interacts with PGAM5 and MLKL; the formation of this complex leads to PGAM5 phosphorylation and increase in PGAM5 phosphatase activity. Binds TRAF2 and is recruited to the TNFR-1 signaling complex. Interacts with PYGL, GLUL and GLUD1; these interactions result in activation of these metabolic enzymes. Interacts with BIRC2/c-IAP1, BIRC3/c-IAP2 and XIAP/BIRC4. Interacts with ARHGEF2. Interacts with PELI1 (via atypical FHA domain); the phosphorylated form at Thr-182 binds preferentially to PELI1. Interacts with BUB1B, TRAF2 and STUB1. Interacts with CASP6. Component of the AIM2 PANoptosome complex, a multiprotein complex that drives inflammatory cell death (PANoptosis). (Microbial infection) Interacts (via RIP homotypic interaction motif/RHIM) with herpes simplex virus 1/HHV-1 protein RIR1/ICP6 (via RHIM); this interaction may induce heteromeric amyloid assemblies and prevent necroptosis activation. In terms of assembly, (Microbial infection) Interacts (via RIP homotypic interaction motif/RHIM) with herpes simplex virus 2/HHV-2 protein RIR1/ICP10 (via RHIM); this interaction prevents necroptosis activation. Post-translationally, (Microbial infection) Proteolytically cleaved by S.flexneri OspD3 within the RIP homotypic interaction motif (RHIM), leading to its degradation and inhibition of necroptosis. RIPK1 and RIPK3 undergo reciprocal auto- and trans-phosphorylation. Autophosphorylated following interaction with ZBP1. Phosphorylation of Ser-199 plays a role in the necroptotic function of RIPK3. Autophosphorylates at Ser-227 following activation by ZBP1: phosphorylation at these sites is a hallmark of necroptosis and is required for binding MLKL. Phosphorylation at Thr-182 is important for its kinase activity, interaction with PELI1 and PELI1-mediated 'Lys-48'-linked polyubiquitination and for its ability to mediate TNF-induced necroptosis. In terms of processing, polyubiquitinated with 'Lys-48' and 'Lys-63'-linked chains by BIRC2/c-IAP1 and BIRC3/c-IAP2, leading to activation of NF-kappa-B. Polyubiquitinated with 'Lys-48'-linked chains by PELI1 leading to its subsequent proteasome-dependent degradation. Ubiquitinated by STUB1 leading to its subsequent proteasome-dependent degradation. Deubiquitinated by USP22. As to expression, highly expressed in the pancreas. Detected at lower levels in heart, placenta, lung and kidney. Expression is significantly increased in colon and lung cancers.

The protein localises to the cytoplasm. It localises to the cytosol. The protein resides in the nucleus. It catalyses the reaction L-seryl-[protein] + ATP = O-phospho-L-seryl-[protein] + ADP + H(+). The catalysed reaction is L-threonyl-[protein] + ATP = O-phospho-L-threonyl-[protein] + ADP + H(+). With respect to regulation, activity is stimulated by ZBP1, which senses double-stranded Z-RNA structures. RIPK3-dependent necroptosis is inhibited by RIPK1: RIPK1 prevents the ZBP1-induced activation of RIPK3 via FADD-mediated recruitment of CASP8, which cleaves RIPK1 and limits TNF-induced necroptosis. Its function is as follows. Serine/threonine-protein kinase that activates necroptosis and apoptosis, two parallel forms of cell death. Necroptosis, a programmed cell death process in response to death-inducing TNF-alpha family members, is triggered by RIPK3 following activation by ZBP1. Activated RIPK3 forms a necrosis-inducing complex and mediates phosphorylation of MLKL, promoting MLKL localization to the plasma membrane and execution of programmed necrosis characterized by calcium influx and plasma membrane damage. In addition to TNF-induced necroptosis, necroptosis can also take place in the nucleus in response to orthomyxoviruses infection: following ZBP1 activation, which senses double-stranded Z-RNA structures, nuclear RIPK3 catalyzes phosphorylation and activation of MLKL, promoting disruption of the nuclear envelope and leakage of cellular DNA into the cytosol. Also regulates apoptosis: apoptosis depends on RIPK1, FADD and CASP8, and is independent of MLKL and RIPK3 kinase activity. Phosphorylates RIPK1: RIPK1 and RIPK3 undergo reciprocal auto- and trans-phosphorylation. In some cell types, also able to restrict viral replication by promoting cell death-independent responses. In response to Zika virus infection in neurons, promotes a cell death-independent pathway that restricts viral replication: together with ZBP1, promotes a death-independent transcriptional program that modifies the cellular metabolism via up-regulation expression of the enzyme ACOD1/IRG1 and production of the metabolite itaconate. Itaconate inhibits the activity of succinate dehydrogenase, generating a metabolic state in neurons that suppresses replication of viral genomes. RIPK3 binds to and enhances the activity of three metabolic enzymes: GLUL, GLUD1, and PYGL. These metabolic enzymes may eventually stimulate the tricarboxylic acid cycle and oxidative phosphorylation, which could result in enhanced ROS production. In terms of biological role, (Microbial infection) In case of herpes simplex virus 1/HHV-1 infection, forms heteromeric amyloid structures with HHV-1 protein RIR1/ICP6 which may inhibit RIPK3-mediated necroptosis, thereby preventing host cell death pathway and allowing viral evasion. The chain is Receptor-interacting serine/threonine-protein kinase 3 from Homo sapiens (Human).